A 291-amino-acid chain; its full sequence is MQSMLCGRPVAADRQLIMAIVNRTPDSFYDRGATFSDEAARAAAHRAVAEGADVIDVGGVKAGPGQGVDVDTEIARLVPFIEWLRSAYTDLLISVDTWRAEVARLACTAGADLINDSWGGADPAMHEVAAELGAGLVCSHTGGALPRTRPFRVSYGTTTRGVVDDVIRQVTAAAERAVAAGVTRDSVLVDPTHDFGKNTFHGLLLLRHVDELVKTGWPVLMSLSNKDFVGETLGVGLTERLEGTLAATALAAAAGVRMFRVHEVVATRRVLEMVASIQGTRPPTRTVRGLA.

The Pterin-binding domain occupies 15 to 272 (QLIMAIVNRT…EVVATRRVLE (258 aa)).

It belongs to the DHPS family. In terms of assembly, homodimer.

Its function is as follows. Has very low affinity for the DHPS substrate 6-hydroxymethyl-7,8-dihydropterin-pyrophosphate, but can bind the inhibitor dapsone. Seems to lack dihydropteroate synthase activity, and does probably not function in folate metabolism. The sequence is that of Inactive dihydropteroate synthase 2 (folP2) from Mycobacterium leprae (strain TN).